The sequence spans 505 residues: Serine/threonine-protein kinase D (505 aa).

A Protein kinase domain is found at 9 to 271 (YEIVKSLGSG…AMYQALHSLI (263 aa)). ATP-binding positions include 15–23 (LGSGGFGDT) and lysine 40. Aspartate 136 acts as the Proton acceptor in catalysis. Residues 436 to 505 (GASATIGGIP…GWIASQLVNF (70 aa)) enclose the SH3b domain.

The protein belongs to the protein kinase superfamily. Ser/Thr protein kinase family.

It catalyses the reaction L-seryl-[protein] + ATP = O-phospho-L-seryl-[protein] + ADP + H(+). The enzyme catalyses L-threonyl-[protein] + ATP = O-phospho-L-threonyl-[protein] + ADP + H(+). The chain is Serine/threonine-protein kinase D (spkD) from Synechocystis sp. (strain ATCC 27184 / PCC 6803 / Kazusa).